The sequence spans 74 residues: UPF0435 protein GWCH70_0415 (74 aa).

It belongs to the UPF0435 family.

The sequence is that of UPF0435 protein GWCH70_0415 from Geobacillus sp. (strain WCH70).